Consider the following 144-residue polypeptide: Large ribosomal subunit protein uL15 (144 aa).

Positions 1–53 (MRLNTLSPAEGSKHASKRLGRGIGSGLGKTGGRGHKGQKSRSGGGVRRGFEGG) are disordered. Residues 21–31 (RGIGSGLGKTG) are compositionally biased toward gly residues.

Belongs to the universal ribosomal protein uL15 family. As to quaternary structure, part of the 50S ribosomal subunit.

Its function is as follows. Binds to the 23S rRNA. This chain is Large ribosomal subunit protein uL15, found in Edwardsiella ictaluri (strain 93-146).